Reading from the N-terminus, the 306-residue chain is 4-diphosphocytidyl-2-C-methyl-D-erythritol kinase (306 aa).

The active site involves Lys-23. An ATP-binding site is contributed by 108 to 118; that stretch reads PIAAGIGGGSA. The active site involves Asp-150.

This sequence belongs to the GHMP kinase family. IspE subfamily.

It carries out the reaction 4-CDP-2-C-methyl-D-erythritol + ATP = 4-CDP-2-C-methyl-D-erythritol 2-phosphate + ADP + H(+). It participates in isoprenoid biosynthesis; isopentenyl diphosphate biosynthesis via DXP pathway; isopentenyl diphosphate from 1-deoxy-D-xylulose 5-phosphate: step 3/6. In terms of biological role, catalyzes the phosphorylation of the position 2 hydroxy group of 4-diphosphocytidyl-2C-methyl-D-erythritol. The sequence is that of 4-diphosphocytidyl-2-C-methyl-D-erythritol kinase from Rhodopseudomonas palustris (strain BisB18).